Here is a 184-residue protein sequence, read N- to C-terminus: Interferon alpha-1 (184 aa).

An N-terminal signal peptide occupies residues 1-23 (MALPVSLLMALVVLSCHSICSLG). 2 disulfide bridges follow: C24–C122 and C52–C162.

It belongs to the alpha/beta interferon family. As to quaternary structure, interacts with CR2.

It is found in the secreted. Its function is as follows. Produced by macrophages, IFN-alpha have antiviral activities. Interferon stimulates the production of two enzymes: a protein kinase and an oligoadenylate synthetase. The protein is Interferon alpha-1 of Equus caballus (Horse).